The following is a 114-amino-acid chain: Holo-[acyl-carrier-protein] synthase (114 aa).

Positions 8 and 58 each coordinate Mg(2+).

It belongs to the P-Pant transferase superfamily. AcpS family. Requires Mg(2+) as cofactor.

The protein resides in the cytoplasm. The catalysed reaction is apo-[ACP] + CoA = holo-[ACP] + adenosine 3',5'-bisphosphate + H(+). In terms of biological role, transfers the 4'-phosphopantetheine moiety from coenzyme A to a Ser of acyl-carrier-protein. This chain is Holo-[acyl-carrier-protein] synthase, found in Mycoplasma genitalium (strain ATCC 33530 / DSM 19775 / NCTC 10195 / G37) (Mycoplasmoides genitalium).